The chain runs to 401 residues: Imidazolonepropionase (401 aa).

Residues His-66 and His-68 each contribute to the Fe(3+) site. The Zn(2+) site is built by His-66 and His-68. Residues Arg-75, Tyr-138, and His-171 each coordinate 4-imidazolone-5-propanoate. Tyr-138 serves as a coordination point for N-formimidoyl-L-glutamate. Residue His-236 participates in Fe(3+) binding. His-236 provides a ligand contact to Zn(2+). Gln-239 lines the 4-imidazolone-5-propanoate pocket. Fe(3+) is bound at residue Asp-311. Position 311 (Asp-311) interacts with Zn(2+). N-formimidoyl-L-glutamate contacts are provided by Asn-313 and Gly-315. Residue Thr-316 coordinates 4-imidazolone-5-propanoate.

Belongs to the metallo-dependent hydrolases superfamily. HutI family. Zn(2+) serves as cofactor. It depends on Fe(3+) as a cofactor.

It is found in the cytoplasm. The enzyme catalyses 4-imidazolone-5-propanoate + H2O = N-formimidoyl-L-glutamate. The protein operates within amino-acid degradation; L-histidine degradation into L-glutamate; N-formimidoyl-L-glutamate from L-histidine: step 3/3. Its function is as follows. Catalyzes the hydrolytic cleavage of the carbon-nitrogen bond in imidazolone-5-propanoate to yield N-formimidoyl-L-glutamate. It is the third step in the universal histidine degradation pathway. The polypeptide is Imidazolonepropionase (Pseudomonas entomophila (strain L48)).